We begin with the raw amino-acid sequence, 235 residues long: Small ribosomal subunit protein uS3 (235 aa).

A KH type-2 domain is found at 39–107; sequence IRDFIKKECH…ELHLNIVEVR (69 aa). Positions 213-235 are disordered; sequence AARDRKAQELQDGPAPRGAGGRR.

This sequence belongs to the universal ribosomal protein uS3 family. Part of the 30S ribosomal subunit. Forms a tight complex with proteins S10 and S14.

In terms of biological role, binds the lower part of the 30S subunit head. Binds mRNA in the 70S ribosome, positioning it for translation. The protein is Small ribosomal subunit protein uS3 of Roseobacter denitrificans (strain ATCC 33942 / OCh 114) (Erythrobacter sp. (strain OCh 114)).